The chain runs to 173 residues: Galactose-6-phosphate isomerase subunit LacB (173 aa).

It belongs to the LacAB/RpiB family. Heteromultimeric protein consisting of LacA and LacB.

The catalysed reaction is aldehydo-D-galactose 6-phosphate = keto-D-tagatose 6-phosphate. The protein operates within carbohydrate metabolism; D-galactose 6-phosphate degradation; D-tagatose 6-phosphate from D-galactose 6-phosphate: step 1/1. In Clostridium acetobutylicum (strain ATCC 824 / DSM 792 / JCM 1419 / IAM 19013 / LMG 5710 / NBRC 13948 / NRRL B-527 / VKM B-1787 / 2291 / W), this protein is Galactose-6-phosphate isomerase subunit LacB.